The sequence spans 427 residues: Glutamate-1-semialdehyde 2,1-aminomutase (427 aa).

The residue at position 265 (lysine 265) is an N6-(pyridoxal phosphate)lysine.

It belongs to the class-III pyridoxal-phosphate-dependent aminotransferase family. HemL subfamily. As to quaternary structure, homodimer. The cofactor is pyridoxal 5'-phosphate.

The protein localises to the cytoplasm. The enzyme catalyses (S)-4-amino-5-oxopentanoate = 5-aminolevulinate. It participates in porphyrin-containing compound metabolism; protoporphyrin-IX biosynthesis; 5-aminolevulinate from L-glutamyl-tRNA(Glu): step 2/2. This is Glutamate-1-semialdehyde 2,1-aminomutase from Pseudomonas fluorescens (strain SBW25).